Here is a 433-residue protein sequence, read N- to C-terminus: uncharacterized protein (433 aa).

The region spanning 104–349 (ERGRNIIQVR…ELEYKKKGIE (246 aa)) is the Radical SAM core domain. [4Fe-4S] cluster contacts are provided by C118, C122, and C125. S-adenosyl-L-methionine contacts are provided by residues 171 to 172 (GE) and 236 to 238 (MLS). The region spanning 370–433 (PFKVGEVTKV…KDNIIVAELV (64 aa)) is the TRAM domain.

This sequence belongs to the radical SAM superfamily. The cofactor is [4Fe-4S] cluster.

This is an uncharacterized protein from Methanocaldococcus jannaschii (strain ATCC 43067 / DSM 2661 / JAL-1 / JCM 10045 / NBRC 100440) (Methanococcus jannaschii).